The sequence spans 662 residues: Eukaryotic peptide chain release factor GTP-binding subunit (662 aa).

Residues 1-220 (MASNQPNNGE…PATVTEDATD (220 aa)) form a disordered region. The segment covering 26–40 (AKAPTFTPKAAPFIP) has biased composition (low complexity). The span at 62 to 89 (YTGQGQNSNSPHPTKSYQQYYQKPTGNT) shows a compositional bias: polar residues. A compositionally biased stretch (basic and acidic residues) spans 91–102 (DEDKSRVPDFSK). Polar residues predominate over residues 122–134 (GGNTSAPKSTKPI). Positions 141-158 (TKAPTTTKPAAPAAQSKT) are enriched in low complexity. Threonine 182 carries the phosphothreonine modification. Residues 192–213 (AKTPSAPAAALKKAAEAAEPAT) show a composition bias toward low complexity. A tr-type G domain is found at 236-464 (KEHVNIVFIG…LDSMTHLERK (229 aa)). Residues 245-252 (GHVDAGKS) form a G1 region. 245–252 (GHVDAGKS) lines the GTP pocket. The G2 stretch occupies residues 301–305 (GKTVE). A G3 region spans residues 322 to 325 (DAPG). GTP is bound by residues 384–387 (NKMD) and 428–429 (AY). A G4 region spans residues 384–387 (NKMD). Residues 427-429 (SAY) form a G5 region. The residue at position 539 (serine 539) is a Phosphoserine.

Belongs to the TRAFAC class translation factor GTPase superfamily. Classic translation factor GTPase family. ERF3 subfamily. As to quaternary structure, component of the eRF1-eRF3-GTP ternary complex, composed of sup45/eRF1, sup35/eRF3 and GTP.

It localises to the cytoplasm. The enzyme catalyses GTP + H2O = GDP + phosphate + H(+). Functionally, GTPase component of the eRF1-eRF3-GTP ternary complex, a ternary complex that mediates translation termination in response to the termination codons. Sup35/eRF3 mediates sup45/ERF1 delivery to stop codons: The eRF1-eRF3-GTP complex binds to a stop codon in the ribosomal A-site. GTP hydrolysis by sup35/eRF3 induces a conformational change that leads to its dissociation, permitting sup45/eRF1 to accommodate fully in the A-site. This Schizosaccharomyces pombe (strain 972 / ATCC 24843) (Fission yeast) protein is Eukaryotic peptide chain release factor GTP-binding subunit (sup35).